The following is a 131-amino-acid chain: Holo-[acyl-carrier-protein] synthase (131 aa).

Mg(2+)-binding residues include Asp8 and Glu58.

This sequence belongs to the P-Pant transferase superfamily. AcpS family. Mg(2+) serves as cofactor.

Its subcellular location is the cytoplasm. The catalysed reaction is apo-[ACP] + CoA = holo-[ACP] + adenosine 3',5'-bisphosphate + H(+). Functionally, transfers the 4'-phosphopantetheine moiety from coenzyme A to a Ser of acyl-carrier-protein. The chain is Holo-[acyl-carrier-protein] synthase from Oenococcus oeni (strain ATCC BAA-331 / PSU-1).